A 403-amino-acid chain; its full sequence is Phosphoglycerate kinase (403 aa).

Residues 24 to 26 (DLN), arginine 39, 62 to 65 (HLGR), arginine 121, and arginine 161 each bind substrate. ATP contacts are provided by residues lysine 211, glycine 299, glutamate 330, and 359–362 (GGDS).

This sequence belongs to the phosphoglycerate kinase family. Monomer.

The protein resides in the cytoplasm. It catalyses the reaction (2R)-3-phosphoglycerate + ATP = (2R)-3-phospho-glyceroyl phosphate + ADP. The protein operates within carbohydrate degradation; glycolysis; pyruvate from D-glyceraldehyde 3-phosphate: step 2/5. In Rhodococcus opacus (strain B4), this protein is Phosphoglycerate kinase.